The chain runs to 945 residues: UvrABC system protein A (945 aa).

31 to 38 (GLSGSGKS) serves as a coordination point for ATP. A C4-type zinc finger spans residues 254-281 (CPVCGHSISELEPKLFSFNNPAGACPTC). ABC transporter domains follow at residues 310–587 (WDRR…PDSL) and 607–937 (RDKK…HFLK). 640-647 (GVSGSGKS) lines the ATP pocket. A C4-type zinc finger spans residues 740–766 (CEACQGDGVIKVEMHFLPDIYVPCDVC).

The protein belongs to the ABC transporter superfamily. UvrA family. In terms of assembly, forms a heterotetramer with UvrB during the search for lesions.

The protein localises to the cytoplasm. Functionally, the UvrABC repair system catalyzes the recognition and processing of DNA lesions. UvrA is an ATPase and a DNA-binding protein. A damage recognition complex composed of 2 UvrA and 2 UvrB subunits scans DNA for abnormalities. When the presence of a lesion has been verified by UvrB, the UvrA molecules dissociate. This chain is UvrABC system protein A, found in Pseudomonas aeruginosa (strain ATCC 15692 / DSM 22644 / CIP 104116 / JCM 14847 / LMG 12228 / 1C / PRS 101 / PAO1).